A 188-amino-acid chain; its full sequence is RWD domain-containing protein 4 (188 aa).

Ser2 carries the post-translational modification N-acetylserine. The region spanning 9-111 (MELEALRSIY…EYAKDNKEQF (103 aa)) is the RWD domain. The interval 132–167 (TPNTAPSSKKKDKKEQLSKAQKRKLADKTDHKGELP) is disordered. A compositionally biased stretch (basic and acidic residues) spans 155-166 (KLADKTDHKGEL).

The sequence is that of RWD domain-containing protein 4 (RWDD4) from Homo sapiens (Human).